Reading from the N-terminus, the 689-residue chain is Glycine--tRNA ligase beta subunit (689 aa).

Belongs to the class-II aminoacyl-tRNA synthetase family. Tetramer of two alpha and two beta subunits.

The protein localises to the cytoplasm. It catalyses the reaction tRNA(Gly) + glycine + ATP = glycyl-tRNA(Gly) + AMP + diphosphate. The sequence is that of Glycine--tRNA ligase beta subunit from Aeromonas hydrophila subsp. hydrophila (strain ATCC 7966 / DSM 30187 / BCRC 13018 / CCUG 14551 / JCM 1027 / KCTC 2358 / NCIMB 9240 / NCTC 8049).